The sequence spans 636 residues: Threonine--tRNA ligase (636 aa).

Residues Met1–Thr61 enclose the TGS domain. The tract at residues Asp238–Pro528 is catalytic. Zn(2+)-binding residues include Cys329, His380, and His505.

This sequence belongs to the class-II aminoacyl-tRNA synthetase family. In terms of assembly, homodimer. The cofactor is Zn(2+).

It is found in the cytoplasm. The enzyme catalyses tRNA(Thr) + L-threonine + ATP = L-threonyl-tRNA(Thr) + AMP + diphosphate + H(+). In terms of biological role, catalyzes the attachment of threonine to tRNA(Thr) in a two-step reaction: L-threonine is first activated by ATP to form Thr-AMP and then transferred to the acceptor end of tRNA(Thr). Also edits incorrectly charged L-seryl-tRNA(Thr). The polypeptide is Threonine--tRNA ligase (Desulfatibacillum aliphaticivorans).